Consider the following 266-residue polypeptide: Interleukin-1 beta (266 aa).

Positions Met1–Asp113 are excised as a propeptide.

Belongs to the IL-1 family. Monomer. In its precursor form, weakly interacts with full-length MEFV; the mature cytokine does not interact at all. Interacts with integrins ITGAV:ITGBV and ITGA5:ITGB1; integrin-binding is required for IL1B signaling. Interacts with cargo receptor TMED10; the interaction is direct and is required for the secretion of IL1B mature form. Interacts with HSP90AB1; the interaction facilitates cargo translocation into the ERGIC. Interacts with HSP90B1; the interaction facilitates cargo translocation into the ERGIC.

The protein localises to the cytoplasm. It localises to the cytosol. It is found in the secreted. Its subcellular location is the lysosome. The protein resides in the extracellular exosome. Its function is as follows. Potent pro-inflammatory cytokine. Initially discovered as the major endogenous pyrogen, induces prostaglandin synthesis, neutrophil influx and activation, T-cell activation and cytokine production, B-cell activation and antibody production, and fibroblast proliferation and collagen production. Promotes Th17 differentiation of T-cells. Synergizes with IL12/interleukin-12 to induce IFNG synthesis from T-helper 1 (Th1) cells. Plays a role in angiogenesis by inducing VEGF production synergistically with TNF and IL6. Involved in transduction of inflammation downstream of pyroptosis: its mature form is specifically released in the extracellular milieu by passing through the gasdermin-D (GSDMD) pore. This chain is Interleukin-1 beta (IL1B), found in Ovis aries (Sheep).